Reading from the N-terminus, the 963-residue chain is Transcription factor cbf12 (963 aa).

2 disordered regions span residues 130 to 207 (NPSN…SQGL) and 248 to 289 (VNMN…PPQK). 2 stretches are compositionally biased toward polar residues: residues 143-207 (FENN…SQGL) and 249-289 (NMNS…PPQK).

It belongs to the Su(H) family.

The protein localises to the nucleus. Its function is as follows. Transcription factor which function may be to trigger the increase of adhesion at stationary phase, possibly by counteracting or replacing cbf11 at the respective promoters. May also play a cbf11-antagonistic role in the regulation of a number of other important processes such as extracellular material production, colony morphogenesis, ploidy maintenance, or meiosis. This is Transcription factor cbf12 (cbf12) from Schizosaccharomyces pombe (strain 972 / ATCC 24843) (Fission yeast).